The chain runs to 132 residues: ATP synthase epsilon chain (132 aa).

The protein belongs to the ATPase epsilon chain family. F-type ATPases have 2 components, CF(1) - the catalytic core - and CF(0) - the membrane proton channel. CF(1) has five subunits: alpha(3), beta(3), gamma(1), delta(1), epsilon(1). CF(0) has three main subunits: a, b and c.

It localises to the cell membrane. In terms of biological role, produces ATP from ADP in the presence of a proton gradient across the membrane. This is ATP synthase epsilon chain from Desulfitobacterium hafniense (strain Y51).